We begin with the raw amino-acid sequence, 1225 residues long: DNA-directed RNA polymerase subunit beta' (1225 aa).

Residues C60, C62, C75, and C78 each contribute to the Zn(2+) site. 3 residues coordinate Mg(2+): D450, D452, and D454. 4 residues coordinate Zn(2+): C818, C892, C899, and C902.

This sequence belongs to the RNA polymerase beta' chain family. In terms of assembly, the RNAP catalytic core consists of 2 alpha, 1 beta, 1 beta' and 1 omega subunit. When a sigma factor is associated with the core the holoenzyme is formed, which can initiate transcription. The cofactor is Mg(2+). Requires Zn(2+) as cofactor.

The enzyme catalyses RNA(n) + a ribonucleoside 5'-triphosphate = RNA(n+1) + diphosphate. In terms of biological role, DNA-dependent RNA polymerase catalyzes the transcription of DNA into RNA using the four ribonucleoside triphosphates as substrates. The polypeptide is DNA-directed RNA polymerase subunit beta' (Streptococcus pneumoniae (strain ATCC 700669 / Spain 23F-1)).